Consider the following 175-residue polypeptide: Putative lipoprotein LppN (175 aa).

A signal peptide spans 1-20 (MRLPGRHVLYALSAVTMLAA). C21 carries N-palmitoyl cysteine lipidation. C21 is lipidated: S-diacylglycerol cysteine. Residues 31-56 (ASTNMNPTNPPATAETATVSPTPAPQ) are disordered. Positions 33–48 (TNMNPTNPPATAETAT) are enriched in low complexity. 3 prevents bacterial uptake by a human macrophage-like cell line regions span residues 61–80 (ETWI…PADL), 101–120 (RAPV…DCAA), and 121–140 (GFAP…VAYL).

The protein localises to the cell membrane. It localises to the cell surface. Probably involved in bacterial recognition and uptake by its host (human). The sequence is that of Putative lipoprotein LppN (lppN) from Mycobacterium tuberculosis (strain ATCC 25618 / H37Rv).